A 367-amino-acid chain; its full sequence is Prenyltransferase idtC (367 aa).

Positions 1–22 (MTTLAWFAGRSMVLDLAALTSA) are cleaved as a signal peptide. The segment covering 32-42 (TSTPTSTPTST) has biased composition (low complexity). The interval 32-84 (TSTPTSTPTSTDKAGTPPGSTIHHYGYPQGSVTKPNNSKTEKENGSPKDSKGN) is disordered. The N-linked (GlcNAc...) asparagine glycan is linked to asparagine 67. The span at 70-82 (KTEKENGSPKDSK) shows a compositional bias: basic and acidic residues. Position 132 (histidine 132) interacts with substrate. Aspartate 139 and aspartate 143 together coordinate Mg(2+). Arginine 148 is a substrate binding site. A glycan (N-linked (GlcNAc...) asparagine) is linked at asparagine 150. The substrate site is built by lysine 233, threonine 234, glutamine 264, asparagine 271, and lysine 281.

The protein belongs to the FPP/GGPP synthase family. Mg(2+) serves as cofactor.

The protein operates within secondary metabolite biosynthesis. Prenyltransferase; part of the gene cluster that mediates the biosynthesis of paspalitrems, indole-diterpene (IDT) mycotoxins that are potent tremorgens in mammals. The geranylgeranyl diphosphate (GGPP) synthase idtG is proposed to catalyze the first step in IDT biosynthesis via catalysis of a series of iterative condensations of isopentenyl diphosphate (IPP) with dimethylallyl diphosphate (DMAPP), geranyl diphosphate (GPP), and farnesyl diphosphate (FPP), to form GGPP. Condensation of indole-3-glycerol phosphate with GGPP by the prenyltransferase idtC then forms 3-geranylgeranylindole (3-GGI). Epoxidation of the two terminal alkenes of the geranylgeranyl moiety by the FAD-dependent monooxygenase idtM, and cyclization by the terpene cyclase idtB then leads to the production of paspaline. The cytochrome P450 monooxygenase idtP then catalyzes oxidative elimination of the pendant methyl group at C-12 of paspaline and generates the C-10 ketone to yield 13-desoxypaxilline. The cytochrome P450 monooxygenase idtQ may catalyze the C-13 oxidation of 13-desoxypaxilline to afford paxilline. Considering that both paspalicine and paxilline were detected in C.paspali, idtQ also catalyzes the formation of paspalinine from 13-desoxypaxilline via paspalicine as an intermediate. Finally, the alpha-prenyltransferase idtF prenylates paspalinine at the C-20 or the C-21 positions to yield paspalitrems A and C, respectively. The hydroxylation of paspalitrem A at C-32 by a still unknown oxidase affords paspalitrem B. The chain is Prenyltransferase idtC from Claviceps paspali (Rye ergot fungus).